The sequence spans 227 residues: MTARALSELVDQGWAQALEPVREQVAQMGEFLRAELAAGHRYLPAGANVLRAFSFPFDQVRVLIVGQDPYPTPGHAVGLSFSVDPEVRPLPRSLANIFTEYTADLGYPQPSNGDLSPWAQRGVLLLNRVLTVRPGTPASHRGKGWEAVTECAIRALVARDTPMVAVLWGRDAATLKPMLTGSACVAIESPHPSPLSASRGFFGSRPFSRANELLTQMGAEPIDWRLP.

Residue Asp-68 is the Proton acceptor of the active site.

Belongs to the uracil-DNA glycosylase (UDG) superfamily. UNG family.

Its subcellular location is the cytoplasm. The enzyme catalyses Hydrolyzes single-stranded DNA or mismatched double-stranded DNA and polynucleotides, releasing free uracil.. In terms of biological role, excises uracil residues from the DNA which can arise as a result of misincorporation of dUMP residues by DNA polymerase or due to deamination of cytosine. This Mycobacterium sp. (strain JLS) protein is Uracil-DNA glycosylase.